Consider the following 355-residue polypeptide: Isopentenyl-diphosphate delta-isomerase (355 aa).

Substrate is bound at residue 12–13 (RK). FMN contacts are provided by residues serine 70, 71 to 73 (SMT), serine 101, and asparagine 130. Residue 101 to 103 (SMR) coordinates substrate. Glutamine 165 lines the substrate pocket. Residue glutamate 166 participates in Mg(2+) binding. FMN is bound by residues lysine 197 and 308-309 (AG).

Belongs to the IPP isomerase type 2 family. Homooctamer. Dimer of tetramers. The cofactor is FMN. Requires NADPH as cofactor. It depends on Mg(2+) as a cofactor.

Its subcellular location is the cytoplasm. The catalysed reaction is isopentenyl diphosphate = dimethylallyl diphosphate. In terms of biological role, involved in the biosynthesis of isoprenoids. Catalyzes the 1,3-allylic rearrangement of the homoallylic substrate isopentenyl (IPP) to its allylic isomer, dimethylallyl diphosphate (DMAPP). This chain is Isopentenyl-diphosphate delta-isomerase, found in Chlorobium phaeovibrioides (strain DSM 265 / 1930) (Prosthecochloris vibrioformis (strain DSM 265)).